The chain runs to 286 residues: Bifunctional protein FolD (286 aa).

166–168 lines the NADP(+) pocket; that stretch reads GAS.

This sequence belongs to the tetrahydrofolate dehydrogenase/cyclohydrolase family. In terms of assembly, homodimer.

The catalysed reaction is (6R)-5,10-methylene-5,6,7,8-tetrahydrofolate + NADP(+) = (6R)-5,10-methenyltetrahydrofolate + NADPH. It carries out the reaction (6R)-5,10-methenyltetrahydrofolate + H2O = (6R)-10-formyltetrahydrofolate + H(+). It participates in one-carbon metabolism; tetrahydrofolate interconversion. Catalyzes the oxidation of 5,10-methylenetetrahydrofolate to 5,10-methenyltetrahydrofolate and then the hydrolysis of 5,10-methenyltetrahydrofolate to 10-formyltetrahydrofolate. This chain is Bifunctional protein FolD, found in Idiomarina loihiensis (strain ATCC BAA-735 / DSM 15497 / L2-TR).